Consider the following 381-residue polypeptide: Odorant receptor 46a, isoform A (381 aa).

Over 1–37 (MSKGVEIFYKGQKAFLNILSLWPQIERRWRIIHQVNY) the chain is Cytoplasmic. The chain crosses the membrane as a helical span at residues 38–58 (VHVIVFWVLLFDLLLVLHVMA). N-linked (GlcNAc...) asparagine glycosylation occurs at N59. The Extracellular segment spans residues 59-65 (NLSYMSE). A helical membrane pass occupies residues 66-86 (VVKAIFILATSAGHTTKLLSI). At 87–127 (KANNVQMEELFRRLDNEEFRPRGANEELIFAAACERSRKLR) the chain is on the cytoplasmic side. The chain crosses the membrane as a helical span at residues 128–148 (DFYGALSFAALSMILIPQFAL). Residues 149–170 (DWSHLPLKTYNPLGENTGSPAY) are Extracellular-facing. A helical membrane pass occupies residues 171 to 191 (WLLYCYQCLALSVSCITNIGF). Over 192 to 255 (DSLCSSLFIF…KTVERLLCKP (64 aa)) the chain is Cytoplasmic. The helical transmembrane segment at 256 to 276 (ISVQIFCSVLVLTANFYAIAV) threads the bilayer. The Extracellular segment spans residues 277–287 (LSDERLELFKY). A helical transmembrane segment spans residues 288–308 (VTYQACMLIQIFILCYYAGEV). At 309–355 (TQRSLDLPHELYKTSWVDWDYRSRRIALLFMQRLHSTLRIRTLNPSL) the chain is on the cytoplasmic side. Residues 356–376 (GFDLMLFSSIVNCSYSYFALL) traverse the membrane as a helical segment. Residues 377–381 (KRVNS) are Extracellular-facing.

It belongs to the insect chemoreceptor superfamily. Heteromeric odorant receptor channel (TC 1.A.69) family. Or2a subfamily. In terms of assembly, interacts with Orco. Complexes exist early in the endomembrane system in olfactory sensory neurons (OSNs), coupling these complexes to the conserved ciliary trafficking pathway. As to expression, isoform A is expressed in a subset of 17 olfactory receptor neurons in the maxillary palp.

The protein localises to the cell membrane. Its function is as follows. Odorant receptor which mediates acceptance or avoidance behavior, depending on its substrates. The odorant receptor repertoire encodes a large collection of odor stimuli that vary widely in identity, intensity, and duration. May form a complex with Orco to form odorant-sensing units, providing sensitive and prolonged odorant signaling and calcium permeability. This chain is Odorant receptor 46a, isoform A (Or46a), found in Drosophila melanogaster (Fruit fly).